The primary structure comprises 446 residues: Coiled-coil domain-containing protein 112 (446 aa).

Coiled-coil stretches lie at residues 35–116 (KTER…RKID) and 219–400 (ERKK…NVSR). Disordered regions lie at residues 253-272 (FHNKQEDNQKQKEEQRKKQK) and 390-430 (LKEK…LLHI). The span at 255-268 (NKQEDNQKQKEEQR) shows a compositional bias: basic and acidic residues.

The protein localises to the cytoplasm. Its subcellular location is the cytoskeleton. The protein resides in the microtubule organizing center. It is found in the centrosome. It localises to the centriolar satellite. This is Coiled-coil domain-containing protein 112 (CCDC112) from Homo sapiens (Human).